A 274-amino-acid polypeptide reads, in one-letter code: 5'-3' exoribonuclease (274 aa).

H8, H10, D15, H40, E65, H76, H190, D247, and H249 together coordinate Mn(2+).

The protein belongs to the PHP family. TrpH/YciV subfamily. The cofactor is Mn(2+).

The catalysed reaction is a ribonucleoside 3',5'-bisphosphate + H2O = a ribonucleoside 5'-phosphate + phosphate. In terms of biological role, efficiently catalyzes the hydrolysis of the 3'-phosphate from 3',5'-bis-phosphonucleotides as well as the successive hydrolysis of 5'-phosphomononucleotides from the 5'-end of short pieces of RNA and DNA, with no specificity toward the identity of the nucleotide base. Is more efficient at hydrolyzing RNA oligonucleotides than DNA oligonucleotides. This enzyme can also hydrolyze annealed DNA duplexes, albeit at a catalytic efficiency lower than that of the corresponding single-stranded oligonucleotides. The polypeptide is 5'-3' exoribonuclease (Haemophilus influenzae (strain ATCC 51907 / DSM 11121 / KW20 / Rd)).